Reading from the N-terminus, the 189-residue chain is UPF0301 protein RF_0044 (189 aa).

It belongs to the UPF0301 (AlgH) family.

In Rickettsia felis (strain ATCC VR-1525 / URRWXCal2) (Rickettsia azadi), this protein is UPF0301 protein RF_0044.